Reading from the N-terminus, the 618-residue chain is UvrABC system protein C (618 aa).

A GIY-YIG domain is found at 13–92; it reads DKPGVYLMKN…IKKYRPKYNI (80 aa). Positions 204-239 constitute a UVR domain; that stretch reads LDIVENFKLNMERAAENLEFEKAAMLRDKINIIEKI.

This sequence belongs to the UvrC family. As to quaternary structure, interacts with UvrB in an incision complex.

It is found in the cytoplasm. Functionally, the UvrABC repair system catalyzes the recognition and processing of DNA lesions. UvrC both incises the 5' and 3' sides of the lesion. The N-terminal half is responsible for the 3' incision and the C-terminal half is responsible for the 5' incision. This Clostridium botulinum (strain Langeland / NCTC 10281 / Type F) protein is UvrABC system protein C.